A 528-amino-acid polypeptide reads, in one-letter code: Na(+)/H(+) antiporter NhaB (528 aa).

The next 10 helical transmembrane spans lie at 25–47, 66–86, 97–117, 130–164, 241–261, 304–324, 351–371, 390–410, 448–468, and 476–496; these read IISF…GWLL, PGGL…SQVL, LLLV…LFVF, VSLL…FYSI, IRMS…CFLV, AFIG…VGLI, ALPF…IIDL, LVVF…VFVG, ATPN…APLI, and VWMA…AIQL.

This sequence belongs to the NhaB Na(+)/H(+) (TC 2.A.34) antiporter family.

The protein localises to the cell inner membrane. The enzyme catalyses 2 Na(+)(in) + 3 H(+)(out) = 2 Na(+)(out) + 3 H(+)(in). Na(+)/H(+) antiporter that extrudes sodium in exchange for external protons. The sequence is that of Na(+)/H(+) antiporter NhaB from Shewanella halifaxensis (strain HAW-EB4).